The primary structure comprises 229 residues: NAD(P)H-hydrate epimerase (229 aa).

A YjeF N-terminal domain is found at 10 to 217 (AINVDLELFN…ALQRKYELNL (208 aa)). 60–64 (NNGGD) lines the (6S)-NADPHX pocket. Residues Asn61 and Asp125 each coordinate K(+). Residues 129-135 (GFSFKPP) and Asp158 each bind (6S)-NADPHX. A K(+)-binding site is contributed by Ser161.

This sequence belongs to the NnrE/AIBP family. It depends on K(+) as a cofactor.

It carries out the reaction (6R)-NADHX = (6S)-NADHX. It catalyses the reaction (6R)-NADPHX = (6S)-NADPHX. Catalyzes the epimerization of the S- and R-forms of NAD(P)HX, a damaged form of NAD(P)H that is a result of enzymatic or heat-dependent hydration. This is a prerequisite for the S-specific NAD(P)H-hydrate dehydratase to allow the repair of both epimers of NAD(P)HX. The protein is NAD(P)H-hydrate epimerase of Drosophila mojavensis (Fruit fly).